The chain runs to 209 residues: MKKVRLKELESRLQQVDGFEKPKLLLEQYPTRPHIAACMLYTIHNTYDDIENKVVADLGCGCGVLSIGTAMLGAGLCVGFDIDEDALEIFNRNAEEFELTNIDMVQCDVCLLSNRMSKSFDTVIMNPPFGTKNNKGTDMAFLKTALEMARTAVYSLHKSSTREHVQKKAAEWKIKIDIIAELRYDLPASYKFHKKKSVDIEVDLIRFSF.

Residues Gln28, Thr31, Gly59, Cys62, Val64, Asp81, and 108-109 (DV) contribute to the S-adenosyl-L-methionine site.

Belongs to the methyltransferase superfamily. PrmA family. In terms of assembly, heterodimer; heterodimerizes with TRMT112. As to expression, expressed from very early development (8 post-conceptual weeks) and expression persists through adulthood in multiple substructures of the brain, including the cerebellar cortex, hippocampus, and striatum.

It localises to the nucleus. Its subcellular location is the presynapse. The protein localises to the postsynapse. The enzyme catalyses adenosine(1832) in 18S rRNA + S-adenosyl-L-methionine = N(6)-methyladenosine(1832) in 18S rRNA + S-adenosyl-L-homocysteine + H(+). With respect to regulation, rRNA N6-adenosine-methyltransferase activity is inhibited by zinc. Catalytic subunit of a heterodimer with TRMT112, which specifically methylates the 6th position of adenine in position 1832 of 18S rRNA. N6-methylation of adenine(1832) in 18S rRNA resides in the decoding center of 18S rRNA and is required for translation and embryonic stem cells (ESCs) pluripotency and differentiation. The polypeptide is rRNA N(6)-adenosine-methyltransferase METTL5 (Homo sapiens (Human)).